The sequence spans 291 residues: Nucleotide-binding protein lmo2474 (291 aa).

An ATP-binding site is contributed by 13-20 (GMSGAGKT). 63–66 (DLRG) serves as a coordination point for GTP.

It belongs to the RapZ-like family.

Functionally, displays ATPase and GTPase activities. In Listeria monocytogenes serovar 1/2a (strain ATCC BAA-679 / EGD-e), this protein is Nucleotide-binding protein lmo2474.